Consider the following 49-residue polypeptide: Large ribosomal subunit protein bL33A (49 aa).

The tract at residues 21–49 is disordered; it reads KNKRNNPERVEMKKYCSRDNKHTLHRETK. Residues 25 to 49 show a composition bias toward basic and acidic residues; it reads NNPERVEMKKYCSRDNKHTLHRETK.

The protein belongs to the bacterial ribosomal protein bL33 family.

The sequence is that of Large ribosomal subunit protein bL33A from Staphylococcus epidermidis (strain ATCC 35984 / DSM 28319 / BCRC 17069 / CCUG 31568 / BM 3577 / RP62A).